Here is a 446-residue protein sequence, read N- to C-terminus: Na(+)-translocating NADH-quinone reductase subunit A (446 aa).

This sequence belongs to the NqrA family. In terms of assembly, composed of six subunits; NqrA, NqrB, NqrC, NqrD, NqrE and NqrF.

The catalysed reaction is a ubiquinone + n Na(+)(in) + NADH + H(+) = a ubiquinol + n Na(+)(out) + NAD(+). Its function is as follows. NQR complex catalyzes the reduction of ubiquinone-1 to ubiquinol by two successive reactions, coupled with the transport of Na(+) ions from the cytoplasm to the periplasm. NqrA to NqrE are probably involved in the second step, the conversion of ubisemiquinone to ubiquinol. The sequence is that of Na(+)-translocating NADH-quinone reductase subunit A from Vibrio anguillarum (Listonella anguillarum).